We begin with the raw amino-acid sequence, 584 residues long: Aspartate--tRNA(Asp/Asn) ligase (584 aa).

Glu-174 contacts L-aspartate. The interval 198–201 (QLFK) is aspartate. Arg-220 is an L-aspartate binding site. ATP-binding positions include 220 to 222 (RDE) and Gln-229. L-aspartate is bound at residue His-447. Position 480 (Glu-480) interacts with ATP. Residue Arg-487 participates in L-aspartate binding. An ATP-binding site is contributed by 532-535 (GFDR).

Belongs to the class-II aminoacyl-tRNA synthetase family. Type 1 subfamily. In terms of assembly, homodimer.

It is found in the cytoplasm. It carries out the reaction tRNA(Asx) + L-aspartate + ATP = L-aspartyl-tRNA(Asx) + AMP + diphosphate. Its function is as follows. Aspartyl-tRNA synthetase with relaxed tRNA specificity since it is able to aspartylate not only its cognate tRNA(Asp) but also tRNA(Asn). Reaction proceeds in two steps: L-aspartate is first activated by ATP to form Asp-AMP and then transferred to the acceptor end of tRNA(Asp/Asn). This chain is Aspartate--tRNA(Asp/Asn) ligase, found in Endomicrobium trichonymphae.